The following is a 361-amino-acid chain: Probable cadicidin biosynthesis thioesterase (361 aa).

The region spanning 2–29 is the 4Fe-4S ferredoxin-type domain; that stretch reads RVTVDSEQCVGAGQCVLNAPEVFDQDDD. The tract at residues 36 to 110 is disordered; the sequence is RADPTSGTTR…RRDSPVTTAD (75 aa). Residues 46 to 61 show a composition bias toward basic residues; the sequence is RSARRATCARRPRSSS. Basic and acidic residues-rich tracts occupy residues 62–74 and 94–104; these read RRTEPAGCADRHR and TDRRQNHRRDS. Serine 201 is a catalytic residue.

It belongs to the thioesterase family.

It functions in the pathway antibiotic biosynthesis; candicidin biosynthesis. Its function is as follows. Probable thioesterase involved in the biosynthesis of candicidin. Could release the macrolide ring from the polyketide synthase. In Streptomyces griseus, this protein is Probable cadicidin biosynthesis thioesterase.